The chain runs to 218 residues: 5-oxoprolinase subunit B (218 aa).

It belongs to the PxpB family. Forms a complex composed of PxpA, PxpB and PxpC.

The enzyme catalyses 5-oxo-L-proline + ATP + 2 H2O = L-glutamate + ADP + phosphate + H(+). Catalyzes the cleavage of 5-oxoproline to form L-glutamate coupled to the hydrolysis of ATP to ADP and inorganic phosphate. The chain is 5-oxoprolinase subunit B from Escherichia coli O157:H7.